Consider the following 584-residue polypeptide: High-affinity choline transporter 1 (584 aa).

The Extracellular segment spans residues 1-6 (MTVHID). A helical membrane pass occupies residues 7 to 27 (GIVAIVLFYLLILFVGLWAAW). The Cytoplasmic portion of the chain corresponds to 28–50 (KSKNTSMEGAMDRSEAIMIGGRD). The chain crosses the membrane as a helical span at residues 51 to 71 (IGLLVGGFTMTATWVGGGYIN). Topologically, residues 72 to 83 (GTAEAVYVPGYG) are extracellular. A helical membrane pass occupies residues 84–104 (LAWAQAPFGYALSLVIGGLFF). The Cytoplasmic segment spans residues 105 to 127 (AKPMRSRGYVTMLDPFQQMYGKR). A helical transmembrane segment spans residues 128-148 (MGGLLFIPALLGEIFWSAAIL). The Extracellular segment spans residues 149–166 (SALGATLSVIVDININVS). A helical transmembrane segment spans residues 167–187 (VVVSAVIAVLYTLVGGLYSVA). Residues 188-193 (YTDVVQ) are Cytoplasmic-facing. A helical membrane pass occupies residues 194 to 214 (LFCIFLGLWISIPFALLNPAV). Residues 215 to 239 (TDIIVTANQEVYQEPWVGNIQSKDS) lie on the Extracellular side of the membrane. The helical transmembrane segment at 240-260 (LIWIDNFLLLMLGGIPWQVYF) threads the bilayer. Residues 261 to 276 (QRVLSASSATYAQVLS) lie on the Cytoplasmic side of the membrane. Residues 277 to 297 (FLAAFGCVLMAIPSVLIGAIG) form a helical membrane-spanning segment. At 298–319 (TSTDWNQTSYGLPGPIGKNETD) the chain is on the extracellular side. Asn303 carries an N-linked (GlcNAc...) asparagine glycan. The helical transmembrane segment at 320 to 340 (MILPIVLQHLCPPYISFFGLG) threads the bilayer. At 341-378 (AVSAAVMSSADSSILSASSMFARNIYHLAFRQEASDKE) the chain is on the cytoplasmic side. The helical transmembrane segment at 379-399 (IVWVMRITIFLFGGAATSMAL) threads the bilayer. Residues 400 to 408 (LAQSIYGLW) lie on the Extracellular side of the membrane. A helical membrane pass occupies residues 409–429 (YLSSDLVYVIIFPQLISVLFV). The Cytoplasmic portion of the chain corresponds to 430–437 (KGTNTYGS). A helical membrane pass occupies residues 438–458 (IAGYIIGFLLRISGGEPYLHM). At 459 to 487 (QPFIYYPGCYLDHSFGDDPVYVQRFPFKT) the chain is on the extracellular side. The helical transmembrane segment at 488-508 (MAMLFSFLGNTGVSYLVKYLF) threads the bilayer. The Cytoplasmic segment spans residues 509–584 (VSGILPPKLD…NPELSKSGND (76 aa)).

This sequence belongs to the sodium:solute symporter (SSF) (TC 2.A.21) family. Phosphorylated. In terms of tissue distribution, specific for cholinergic neurons.

It is found in the membrane. Functionally, imports choline from the extracellular space to the neuron with high affinity. Rate-limiting step in acetylcholine synthesis. Sodium ion and chloride ion dependent. This is High-affinity choline transporter 1 (CHT1) from Torpedo marmorata (Marbled electric ray).